Reading from the N-terminus, the 74-residue chain is UPF0154 protein LVIS_1358 (74 aa).

The helical transmembrane segment at 4-24 (WIWILIVIVVGLACAAGGFYG) threads the bilayer.

The protein belongs to the UPF0154 family.

It localises to the cell membrane. The polypeptide is UPF0154 protein LVIS_1358 (Levilactobacillus brevis (strain ATCC 367 / BCRC 12310 / CIP 105137 / JCM 1170 / LMG 11437 / NCIMB 947 / NCTC 947) (Lactobacillus brevis)).